The sequence spans 456 residues: MRPHHIHHIAIVGSGPSGFFAAASVLKAADASDEINVAVDMLEMLPTPWGLVRSGVAPDHPKIKSISKQFEKTAEDPRFRFFGNVIVGKHIEPAELAERYDAVIYAVGAQSDRALNIPGEDLPGSIAAVDFVGWYNAHPNFHERSPDLSGSRAVVIGNGNVALDVTRILITDPDVLAFTDIADHALESLRPRGIEEVVIVGRRGPLQTAFTTLELRELADIEGVDVLVDPAQLEGISDENAAAAGKTTRQNIKVLRDYTVRTPKPGHRRIVFRFLTSPIEIKGKGKVERIVLGQNELVTDDNGRVAAKDTGVREELPAQLIVRSIGYRGVPTPGLPFDDSSVTIPNTNGRVNGSRNEYVVGWIKRGPTGVIGTNKKDSQDTVDTLMENLAGANDTEKFGADHADRLAEWLAERQPKLVTSAHWQAIDRFERAAGEPHGRPRVKLPNLAELLRIGHG.

Residues serine 17, glutamate 43, leucine 51, and valine 87 each contribute to the FAD site. Residues arginine 113, 158-161, 202-203, and glutamate 214 contribute to the NADP(+) site; these read NGNV and RR. FAD is bound by residues tryptophan 362 and 369-371; that span reads GVI. NADP(+) is bound at residue glycine 369.

It belongs to the ferredoxin--NADP reductase type 1 family. In terms of assembly, monomer. Requires FAD as cofactor.

The catalysed reaction is 2 reduced [2Fe-2S]-[ferredoxin] + NADP(+) + H(+) = 2 oxidized [2Fe-2S]-[ferredoxin] + NADPH. May serve as electron transfer protein and supply electrons to P450 systems. This chain is NADPH-ferredoxin reductase FprA (fprA), found in Mycobacterium leprae (strain TN).